Reading from the N-terminus, the 159-residue chain is Transcription antitermination protein NusB (159 aa).

Belongs to the NusB family.

Involved in transcription antitermination. Required for transcription of ribosomal RNA (rRNA) genes. Binds specifically to the boxA antiterminator sequence of the ribosomal RNA (rrn) operons. The protein is Transcription antitermination protein NusB of Xanthomonas axonopodis pv. citri (strain 306).